Consider the following 209-residue polypeptide: Uracil phosphoribosyltransferase (209 aa).

5-phospho-alpha-D-ribose 1-diphosphate is bound by residues Arg-79, Arg-104, and 131–139 (DPMLATANS). Uracil is bound by residues Ile-194 and 199-201 (GDA). Asp-200 is a binding site for 5-phospho-alpha-D-ribose 1-diphosphate.

Belongs to the UPRTase family. Mg(2+) serves as cofactor.

The catalysed reaction is UMP + diphosphate = 5-phospho-alpha-D-ribose 1-diphosphate + uracil. It functions in the pathway pyrimidine metabolism; UMP biosynthesis via salvage pathway; UMP from uracil: step 1/1. Allosterically activated by GTP. Catalyzes the conversion of uracil and 5-phospho-alpha-D-ribose 1-diphosphate (PRPP) to UMP and diphosphate. In Mesorhizobium japonicum (strain LMG 29417 / CECT 9101 / MAFF 303099) (Mesorhizobium loti (strain MAFF 303099)), this protein is Uracil phosphoribosyltransferase.